A 46-amino-acid chain; its full sequence is Short transmembrane mitochondrial protein 1 (46 aa).

A helical membrane pass occupies residues Gly-7–Glu-23.

Belongs to the STMP1 family. As to expression, widely expressed. Expressed more abundantly in brain compared with other tissues such as heart, muscle and liver.

The protein localises to the mitochondrion inner membrane. The protein resides in the mitochondrion outer membrane. It is found in the mitochondrion intermembrane space. Its function is as follows. Microprotein involved in mitochondrial respiratory chain complex III (ubiquinol-cytochrome c oxidoreductase) and complex IV (mitochondrial cytochrome c oxidase complex) assembly. Required for the formation of mitochondrial supercomplexes (SCs). Also required for the activation of the NLRP3 inflammasome. In Danio rerio (Zebrafish), this protein is Short transmembrane mitochondrial protein 1.